Consider the following 308-residue polypeptide: D-alanine--D-alanine ligase (308 aa).

The ATP-grasp domain maps to 103–302 (KTVMKTAGVP…FDELVQWMVE (200 aa)). 130-184 (MEPPYVIKPVADGSSVGVYIITEQHQHPPQELFRDDWAYGDKLLVEKYVAGKELT) contacts ATP. Asp252, Glu269, and Asn271 together coordinate Mg(2+).

Belongs to the D-alanine--D-alanine ligase family. Mg(2+) is required as a cofactor. The cofactor is Mn(2+).

The protein resides in the cytoplasm. It carries out the reaction 2 D-alanine + ATP = D-alanyl-D-alanine + ADP + phosphate + H(+). The protein operates within cell wall biogenesis; peptidoglycan biosynthesis. Functionally, cell wall formation. In Rhodopseudomonas palustris (strain BisA53), this protein is D-alanine--D-alanine ligase.